The following is a 364-amino-acid chain: Deoxyribonuclease-2-alpha (364 aa).

Positions 1–21 (MATLSPLLLAALLWVPVGTLT) are cleaved as a signal peptide. A disulfide bridge links C22 with C161. 6 N-linked (GlcNAc...) asparagine glycosylation sites follow: N72, N88, N171, N214, N268, and N292. Disulfide bonds link C269–C349 and C310–C329. The active site involves H297.

It belongs to the DNase II family.

Its subcellular location is the lysosome. The catalysed reaction is Endonucleolytic cleavage to nucleoside 3'-phosphates and 3'-phosphooligonucleotide end-products.. Its function is as follows. Hydrolyzes DNA under acidic conditions with a preference for double-stranded DNA. Plays a major role in the clearance of nucleic acids generated through apoptosis, hence preventing autoinflammation. Necessary for proper fetal development and for definitive erythropoiesis in fetal liver and bone marrow, where it degrades nuclear DNA expelled from erythroid precursor cells. The protein is Deoxyribonuclease-2-alpha (DNASE2) of Sus scrofa (Pig).